An 866-amino-acid polypeptide reads, in one-letter code: Thiamine diphosphate dependent-3-acetyloctanal synthase PigD (866 aa).

The disordered stretch occupies residues 826-866 (KGWQRDPSDREALQERKDWAARQPESTSTSFDQGQNKEAIS). Residues 828–845 (WQRDPSDREALQERKDWA) show a composition bias toward basic and acidic residues. Residues 849–866 (PESTSTSFDQGQNKEAIS) are compositionally biased toward polar residues.

The protein belongs to the TPP enzyme family. Thiamine diphosphate serves as cofactor.

The catalysed reaction is (2E)-octenal + pyruvate + H(+) = (S)-3-acetyloctanal + CO2. It participates in antibiotic biosynthesis; prodigiosin biosynthesis. Functionally, involved in the biosynthesis of 2-methyl-3-n-amyl-pyrrole (MAP), one of the terminal products involved in the biosynthesis of the red antibiotic prodigiosin (Pig). Catalyzes the decarboxylation of pyruvate, followed by the modification of the resulting two-carbon fragment acetaldehyde at the C3 position of the 2-octenal (1,2-addition of acetaldehyde) giving 3-acetyloctanal. The chain is Thiamine diphosphate dependent-3-acetyloctanal synthase PigD from Serratia sp. (strain ATCC 39006) (Prodigiosinella confusarubida).